Reading from the N-terminus, the 318-residue chain is Mitochondrial thiamine pyrophosphate carrier (318 aa).

3 Solcar repeats span residues 13–106 (ISNV…LTEL), 116–202 (RDFS…LKRA), and 214–309 (NGNF…FCNF). Residues 19-39 (AVAGSVSGLVTRVLISPLDVI) form a helical membrane-spanning segment. Phosphoserine is present on serine 51. 4 helical membrane-spanning segments follow: residues 87-107 (LLSIGYGAVQFLSFEALTELV), 122-142 (FLCGGLSACVATLAVHPVDVL), 173-193 (VFYKGLNPTLIAIFPYAGFQF), and 220-240 (LLCGSGAGVISKTLTYPLDLF). The Substrate recognition motif lies at 241 to 246 (KKRLQV). A helical membrane pass occupies residues 293–313 (ALSTGLVFFWYELFCNFFHHM).

It belongs to the mitochondrial carrier (TC 2.A.29) family.

It is found in the mitochondrion membrane. The catalysed reaction is thiamine phosphate(out) + thiamine diphosphate(in) = thiamine phosphate(in) + thiamine diphosphate(out). Its function is as follows. Mitochondrial transporter mediating uptake of thiamine diphosphate into mitochondria. It is not clear if the antiporter activity is affected by the membrane potential or by the proton electrochemical gradient. The protein is Mitochondrial thiamine pyrophosphate carrier (SLC25A19) of Bos taurus (Bovine).